The following is a 650-amino-acid chain: Threonine--tRNA ligase (650 aa).

Positions 1–61 (MIKITFPDGA…DEDGTLEIVM (61 aa)) constitute a TGS domain. The catalytic stretch occupies residues 242 to 540 (DHRKLGKELD…LIETYKGAFP (299 aa)). The Zn(2+) site is built by Cys-336, His-387, and His-517.

The protein belongs to the class-II aminoacyl-tRNA synthetase family. As to quaternary structure, homodimer. The cofactor is Zn(2+).

The protein resides in the cytoplasm. The catalysed reaction is tRNA(Thr) + L-threonine + ATP = L-threonyl-tRNA(Thr) + AMP + diphosphate + H(+). Catalyzes the attachment of threonine to tRNA(Thr) in a two-step reaction: L-threonine is first activated by ATP to form Thr-AMP and then transferred to the acceptor end of tRNA(Thr). Also edits incorrectly charged L-seryl-tRNA(Thr). This Streptococcus suis (strain 98HAH33) protein is Threonine--tRNA ligase.